A 264-amino-acid polypeptide reads, in one-letter code: Carbonic anhydrase 7 (264 aa).

Positions 5–262 constitute an Alpha-carbonic anhydrase domain; the sequence is HCWGYGQDDG…LKGRVVKASF (258 aa). H66 acts as the Proton donor/acceptor in catalysis. H96, H98, and H121 together coordinate Zn(2+). 201–202 lines the substrate pocket; the sequence is TT.

This sequence belongs to the alpha-carbonic anhydrase family. Zn(2+) serves as cofactor.

It is found in the cytoplasm. The catalysed reaction is hydrogencarbonate + H(+) = CO2 + H2O. Reversible hydration of carbon dioxide. This chain is Carbonic anhydrase 7 (Ca7), found in Mus musculus (Mouse).